The primary structure comprises 165 residues: Sorting nexin-12 (165 aa).

The segment at 1-20 (MSDTAVADTRRLNSKPQDLT) is disordered. At serine 2 the chain carries N-acetylserine. Position 23 is a phosphotyrosine (tyrosine 23). Residues 28–151 (NFLEIDIFNP…HMFLQEEAID (124 aa)) form the PX domain. A 1,2-diacyl-sn-glycero-3-phospho-(1D-myo-inositol-3-phosphate)-binding residues include arginine 71, serine 73, lysine 96, and arginine 118. Phosphoserine is present on serine 73.

The protein belongs to the sorting nexin family.

It is found in the membrane. May be involved in several stages of intracellular trafficking. This chain is Sorting nexin-12 (Snx12), found in Mus musculus (Mouse).